Consider the following 418-residue polypeptide: uncharacterized protein (418 aa).

The protein belongs to the poxviruses C4/C10 family.

This is an uncharacterized protein from Fowlpox virus (strain NVSL) (FPV).